We begin with the raw amino-acid sequence, 223 residues long: Transcription factor bHLH75 (223 aa).

The disordered stretch occupies residues 58 to 100 (FPNLLHGNTRRKGNKEESGSKRRRKRSEEEEAMNGDETQKPKD). The bHLH domain maps to 110 to 160 (QATDSHSLAERVRREKINERLKCLQDLVPGCYKAMGMAVMLDVIIDYVRSL).

Homodimer. Expressed in leaves, stems, and flowers.

The protein resides in the nucleus. This Arabidopsis thaliana (Mouse-ear cress) protein is Transcription factor bHLH75 (BHLH75).